The following is a 611-amino-acid chain: Calmegin (611 aa).

The N-terminal stretch at 1-19 (MRFQGVGLCLGLLFITVNA) is a signal peptide. Over 20 to 471 (DFMDDGVEVE…LVIAAEERPW (452 aa)) the chain is Lumenal. K128 carries the N6-acetyllysine modification. Cysteines 151 and 185 form a disulfide. Positions 254-335 (LDDVVPPINP…KAEKPEDWSD (82 aa)) are disordered. A compositionally biased stretch (basic and acidic residues) spans 265–284 (REIDDPSDKKPEEWDDRAKI). Tandem repeats lie at residues 267-280 (IDDP…EWDD), 284-297 (IPDP…DWDE), 303-316 (IEDS…GWLD), 322-335 (IPNP…DWSD), 339-352 (GEWE…PACQ), 356-369 (GEWK…PKYK), 370-383 (GIWR…PNYQ), and 384-397 (GLWS…PDYF). An interaction with PPIB region spans residues 317 to 350 (DEPKFIPNPKAEKPEDWSDDMDGEWEAPHIPNPA). A disulfide bridge connects residues C351 and C355. A helical membrane pass occupies residues 472-492 (LWLMYLVMAGLPVALVASFCW). At 493 to 611 (PRKVKKKYED…SLRKRRVRKD (119 aa)) the chain is on the cytoplasmic side. The interval 517-611 (AALEQEAEEE…SLRKRRVRKD (95 aa)) is disordered. Residues 526 to 584 (EKAPEKPEDVQEEKKPGEAEVVTVEKEVIGEPEEKSKEDRETLEGQEEVSKLSKSGSED) are compositionally biased toward basic and acidic residues. S561, S578, S580, S582, S592, S595, and S602 each carry phosphoserine. The segment covering 602–611 (SLRKRRVRKD) has biased composition (basic residues).

The protein belongs to the calreticulin family. In terms of assembly, interacts with PDILT and PPIB. Interacts with ADAM2. Interacts with ADAM1A, ADAM1B and ADAM3; these are protein-coding genes in mouse but may be pseudogenes in other organisms. As to expression, detected in testis (at protein level). Detected in testis.

It localises to the endoplasmic reticulum membrane. Functions during spermatogenesis as a chaperone for a range of client proteins that are important for sperm adhesion onto the egg zona pellucida and for subsequent penetration of the zona pellucida. Required for normal sperm migration from the uterus into the oviduct. Required for normal male fertility. Binds calcium ions. The protein is Calmegin (Clgn) of Mus musculus (Mouse).